The sequence spans 836 residues: Protein O-mannosyl-transferase TMTC2 (836 aa).

Residues 1-21 (MIAELVSSALGLALYLNTLSA) form a helical membrane-spanning segment. At 22–77 (DFCYDDSRAIKTNQDLLPETPWTHIFYNDFWGTLLTHSGSHKSYRPLCTLSFRLNH) the chain is on the extracellular side. Residues 78–98 (AIGGLNPWSYHLVNVLLHAAV) form a helical membrane-spanning segment. Over 99-107 (TGLFTRFSK) the chain is Cytoplasmic. Residues 108–128 (ALLGDGYWTFMAGLMFASHPI) traverse the membrane as a helical segment. The Extracellular portion of the chain corresponds to 129–132 (HTEA). The chain crosses the membrane as a helical span at residues 133 to 153 (VAGIVGRADVGASLFFLLSLL). Topologically, residues 154 to 168 (CYIKHCSTRGYSART) are cytoplasmic. 2 consecutive transmembrane segments (helical) span residues 169–184 (WGWFLGTGLCAGCSML) and 185–204 (WKEQGVTVLAVSAVYDVFVF). Residues 205–220 (HRLKMKQILPTIYKRK) are Cytoplasmic-facing. The helical transmembrane segment at 221-241 (NLSLFLSISLLTFWGTCLLGA) threads the bilayer. Residues 242–312 (RLYWMGNKPP…KTVCDWRNLH (71 aa)) lie on the Extracellular side of the membrane. The helical transmembrane segment at 313 to 333 (TVAFYSGLLLLAYCGLKNPSL) threads the bilayer. At 334 to 392 (EGECNGKALTNGKQNANGHSCHSDVEYRNSEMKPSFASKVENGIKNCVPQRTQLPSTEN) the chain is on the cytoplasmic side. The chain crosses the membrane as a helical span at residues 393–415 (IVILSLSLLIIPFIPATNLFFYV). Residues 416–422 (GFVIAER) are Extracellular-facing. A helical membrane pass occupies residues 423-443 (VLYIPSMGFCLLITVGARALY). Over 444 to 449 (VKVQKR) the chain is Cytoplasmic. The chain crosses the membrane as a helical span at residues 450–470 (FLKSLVFYATATLIVFYGVKT). Residues 471-836 (AIRNGDWQNE…EKQGLKTSKT (366 aa)) lie on the Extracellular side of the membrane. TPR repeat units lie at residues 493-526 (AKAWGNLGNVLKSQSKISEAESAYRNALFYRSNM), 527-560 (ADMLYNLGLLLQENSRFAEALHYYKLAIGSRPTL), 561-594 (ASAYLNTGIILMNQGKTEEARRTFLKCSEIPDEN), 606-639 (TSCLYNLGKLYHEQGRYEEALSVYREAIQKMPRH), 643-676 (QSLYNMMGEAYMRLSKLPEAEHWYMESLRSKTDH), 677-710 (IPAHLTYGKLLALTGRKSEAEKFFLKAIELDPTK), 711-744 (GNCYMHYGQFLLEESRLTEAAEMAKKAAELDNTE), 745-778 (FDVVFNAAHMLRQASLNEAAEKYYDLAARLRPNY), and 779-812 (PAALMNLGAILHLNGRLQKAEANYLRALQLKPDD).

This sequence belongs to the TMTC family.

It localises to the membrane. The protein resides in the endoplasmic reticulum. It catalyses the reaction a di-trans,poly-cis-dolichyl beta-D-mannosyl phosphate + L-seryl-[protein] = 3-O-(alpha-D-mannosyl)-L-seryl-[protein] + a di-trans,poly-cis-dolichyl phosphate + H(+). The catalysed reaction is a di-trans,poly-cis-dolichyl beta-D-mannosyl phosphate + L-threonyl-[protein] = 3-O-(alpha-D-mannosyl)-L-threonyl-[protein] + a di-trans,poly-cis-dolichyl phosphate + H(+). The protein operates within protein modification; protein glycosylation. Functionally, transfers mannosyl residues to the hydroxyl group of serine or threonine residues. The 4 members of the TMTC family are O-mannosyl-transferases dedicated primarily to the cadherin superfamily, each member seems to have a distinct role in decorating the cadherin domains with O-linked mannose glycans at specific regions. Also acts as O-mannosyl-transferase on other proteins such as PDIA3. The chain is Protein O-mannosyl-transferase TMTC2 from Mus musculus (Mouse).